The following is a 513-amino-acid chain: Ectonucleoside triphosphate diphosphohydrolase 1 (513 aa).

Residues 1–16 (MEDRRESELKVFCSKN) are Cytoplasmic-facing. Residues 17-37 (ILSILGFSCIIAVIALLALGL) traverse the membrane as a helical segment. Residues 38–481 (TQNKALPENV…SPPLPHSTYV (444 aa)) lie on the Extracellular side of the membrane. N73 carries an N-linked (GlcNAc...) asparagine glycan. The active-site Proton acceptor is E174. 2 N-linked (GlcNAc...) asparagine glycosylation sites follow: N227 and N245. Disulfide bonds link C255-C300 and C281-C327. N307 and N336 each carry an N-linked (GlcNAc...) asparagine glycan. C340 and C345 form a disulfide bridge. N373 carries an N-linked (GlcNAc...) asparagine glycan. The cysteines at positions 393 and 416 are disulfide-linked. N460 carries N-linked (GlcNAc...) asparagine glycosylation. Residues 482 to 502 (FLMVLFSLILLAVIIVGIVVF) form a helical membrane-spanning segment. Topologically, residues 503–513 (HKPSYFWKDMV) are cytoplasmic.

This sequence belongs to the GDA1/CD39 NTPase family. As to quaternary structure, homodimer; disulfide-linked. It depends on Ca(2+) as a cofactor. The cofactor is Mg(2+). In terms of processing, N-glycosylated. The N-terminus is blocked. Post-translationally, palmitoylated on Cys-13; which is required for caveola targeting.

Its subcellular location is the membrane. It localises to the caveola. It catalyses the reaction a ribonucleoside 5'-triphosphate + 2 H2O = a ribonucleoside 5'-phosphate + 2 phosphate + 2 H(+). The catalysed reaction is a ribonucleoside 5'-triphosphate + H2O = a ribonucleoside 5'-diphosphate + phosphate + H(+). The enzyme catalyses a ribonucleoside 5'-diphosphate + H2O = a ribonucleoside 5'-phosphate + phosphate + H(+). It carries out the reaction ATP + 2 H2O = AMP + 2 phosphate + 2 H(+). It catalyses the reaction ATP + H2O = ADP + phosphate + H(+). The catalysed reaction is ADP + H2O = AMP + phosphate + H(+). The enzyme catalyses CTP + 2 H2O = CMP + 2 phosphate + 2 H(+). It carries out the reaction CTP + H2O = CDP + phosphate + H(+). It catalyses the reaction CDP + H2O = CMP + phosphate + H(+). The catalysed reaction is GTP + 2 H2O = GMP + 2 phosphate + 2 H(+). The enzyme catalyses GTP + H2O = GDP + phosphate + H(+). It carries out the reaction GDP + H2O = GMP + phosphate + H(+). It catalyses the reaction ITP + 2 H2O = IMP + 2 phosphate + 2 H(+). The catalysed reaction is ITP + H2O = IDP + phosphate + H(+). The enzyme catalyses IDP + H2O = IMP + phosphate + H(+). It carries out the reaction UTP + 2 H2O = UMP + 2 phosphate + 2 H(+). It catalyses the reaction UTP + H2O = UDP + phosphate + H(+). The catalysed reaction is UDP + H2O = UMP + phosphate + H(+). Functionally, catalyzes the hydrolysis of both di- and triphosphate nucleotides (NDPs and NTPs) and hydrolyze NTPs to nucleotide monophosphates (NMPs) in two distinct successive phosphate-releasing steps, with NDPs as intermediates and participates in the regulation of extracellular levels of nucleotides. By hydrolyzing proinflammatory ATP and platelet-activating ADP to AMP, it blocks platelet aggregation and supports blood flow. In Bos taurus (Bovine), this protein is Ectonucleoside triphosphate diphosphohydrolase 1.